The following is a 462-amino-acid chain: tRNA modification GTPase MnmE (462 aa).

(6S)-5-formyl-5,6,7,8-tetrahydrofolate is bound by residues Arg-34, Glu-92, and Lys-131. Residues 227 to 386 form the TrmE-type G domain; sequence GLQVVIAGKP…LIDAITAHAG (160 aa). Asn-237 provides a ligand contact to K(+). GTP-binding positions include 237–242, 256–262, and 281–284; these read NAGKSS, TDIAGTT, and DTAG. Ser-241 is a binding site for Mg(2+). Thr-256, Ile-258, and Thr-261 together coordinate K(+). Thr-262 is a Mg(2+) binding site. Lys-462 contributes to the (6S)-5-formyl-5,6,7,8-tetrahydrofolate binding site.

It belongs to the TRAFAC class TrmE-Era-EngA-EngB-Septin-like GTPase superfamily. TrmE GTPase family. In terms of assembly, homodimer. Heterotetramer of two MnmE and two MnmG subunits. K(+) is required as a cofactor.

Its subcellular location is the cytoplasm. Its function is as follows. Exhibits a very high intrinsic GTPase hydrolysis rate. Involved in the addition of a carboxymethylaminomethyl (cmnm) group at the wobble position (U34) of certain tRNAs, forming tRNA-cmnm(5)s(2)U34. This chain is tRNA modification GTPase MnmE, found in Acinetobacter baylyi (strain ATCC 33305 / BD413 / ADP1).